The sequence spans 305 residues: NADH-ubiquinone oxidoreductase chain 1 (305 aa).

Transmembrane regions (helical) follow at residues 3–23, 71–91, 99–119, 145–165, 175–195, 221–241, 246–266, and 285–305; these read WVAVIVSIIPFVGVLLAVGFY, VGPFILAPALMLAISLLGWLL, VFYVFGVILFMVITSVSVYGV, YEIPMGFIFFCVVLCSGVFMF, LFFFFLPLCVVMLVWMLCMLA, GGGFAVMFIAEYSSILLSSVM, FFGGNEALVGFFMMVFAIFFV, and WTVLLCVMLTASVCVVVLVGV.

The protein belongs to the complex I subunit 1 family.

It is found in the mitochondrion inner membrane. The catalysed reaction is a ubiquinone + NADH + 5 H(+)(in) = a ubiquinol + NAD(+) + 4 H(+)(out). In terms of biological role, core subunit of the mitochondrial membrane respiratory chain NADH dehydrogenase (Complex I) that is believed to belong to the minimal assembly required for catalysis. Complex I functions in the transfer of electrons from NADH to the respiratory chain. The immediate electron acceptor for the enzyme is believed to be ubiquinone. In Mytilus edulis (Blue mussel), this protein is NADH-ubiquinone oxidoreductase chain 1 (ND1).